A 331-amino-acid polypeptide reads, in one-letter code: Protein Brevis radix-like 1 (331 aa).

Residues 1–111 (MFTCINCTKM…HQSGRPDSRF (111 aa)) are disordered. Composition is skewed to polar residues over residues 25–41 (STTP…TTQI) and 48–66 (FSGS…SSNL). The BRX 1 domain occupies 137 to 192 (KEWMAQVEPGVHITFVSLPSGGNDLKRIRFSREVFDKWQAQRWWGENYDRIVELYN). Disordered regions lie at residues 201 to 246 (LQTP…VPHH) and 258 to 279 (TTSS…GEWV). A compositionally biased stretch (basic and acidic residues) spans 221-235 (DSARESRDWTQRDNN). Residues 276–331 (GEWVEEDEPGVYITIRQLPDGTRELRRVRFSRERFGEVHAKTWWEQNRDRIQTQYL) form the BRX 2 domain.

The protein belongs to the BRX family. In terms of assembly, heterodimer with BRXL1. In terms of tissue distribution, expressed in roots.

The protein localises to the nucleus. In terms of biological role, may act as a regulator of cell proliferation and elongation in the root. This Arabidopsis thaliana (Mouse-ear cress) protein is Protein Brevis radix-like 1 (BRXL1).